A 288-amino-acid polypeptide reads, in one-letter code: Nucleotide-binding protein Tola_2941 (288 aa).

8–15 contributes to the ATP binding site; sequence GRSGSGKT. 56–59 is a GTP binding site; the sequence is DVRN.

It belongs to the RapZ-like family.

Its function is as follows. Displays ATPase and GTPase activities. This Tolumonas auensis (strain DSM 9187 / NBRC 110442 / TA 4) protein is Nucleotide-binding protein Tola_2941.